The primary structure comprises 644 residues: Exoribonuclease 2 (644 aa).

Residues 189–516 form the RNB domain; it reads REDLTALDFV…NHRLLKAVIK (328 aa). The S1 motif domain maps to 561 to 643; the sequence is DTRFAAEIVD…ETRSIIARPV (83 aa).

This sequence belongs to the RNR ribonuclease family. RNase II subfamily.

It is found in the cytoplasm. The catalysed reaction is Exonucleolytic cleavage in the 3'- to 5'-direction to yield nucleoside 5'-phosphates.. Involved in mRNA degradation. Hydrolyzes single-stranded polyribonucleotides processively in the 3' to 5' direction. This is Exoribonuclease 2 from Escherichia coli O127:H6 (strain E2348/69 / EPEC).